A 52-amino-acid chain; its full sequence is Histone H2A (52 aa).

The interval 1–25 is disordered; sequence MSGRGKTGGKARAKAKTRSSRAGLQ. Ser-2 is subject to N-acetylserine. At Ser-2 the chain carries Phosphoserine. N6-(2-hydroxyisobutyryl)lysine is present on Lys-6. Lys-6 carries the post-translational modification N6-acetyllysine. The segment covering 7-19 has biased composition (basic residues); the sequence is TGGKARAKAKTRS. Residue Lys-10 is modified to N6-(2-hydroxyisobutyryl)lysine; alternate. Residue Lys-10 is modified to N6-lactoyllysine; alternate. Lys-10 is subject to N6-succinyllysine. Glycyl lysine isopeptide (Lys-Gly) (interchain with G-Cter in ubiquitin) cross-links involve residues Lys-14 and Lys-16. At Lys-37 the chain carries N6-(2-hydroxyisobutyryl)lysine; alternate.

As to quaternary structure, the nucleosome is a histone octamer containing two molecules each of H2A, H2B, H3 and H4 assembled in one H3-H4 heterotetramer and two H2A-H2B heterodimers. The octamer wraps approximately 147 bp of DNA. Post-translationally, acetylation is not necessary for the antibacterial activity. Monoubiquitination in C-terminus gives a specific tag for epigenetic transcriptional repression. Following DNA double-strand breaks (DSBs), it is ubiquitinated through 'Lys-63' linkage of ubiquitin moieties, leading to the recruitment of repair proteins to sites of DNA damage. H2AK119Ub and ionizing radiation-induced 'Lys-63'-linked ubiquitination are distinct events. In terms of processing, phosphorylation on Ser-2 is enhanced during mitosis. Phosphorylation on Ser-2 directly represses transcription.

It is found in the nucleus. It localises to the chromosome. Its subcellular location is the secreted. In terms of biological role, core component of nucleosome. Nucleosomes wrap and compact DNA into chromatin, limiting DNA accessibility to the cellular machineries which require DNA as a template. Histones thereby play a central role in transcription regulation, DNA repair, DNA replication and chromosomal stability. DNA accessibility is regulated via a complex set of post-translational modifications of histones, also called histone code, and nucleosome remodeling. Its function is as follows. Hipposin shows strong antimicrobial activity against several Gram-positive and Gram-negative bacteria. The sequence is that of Histone H2A from Hippoglossus hippoglossus (Atlantic halibut).